We begin with the raw amino-acid sequence, 95 residues long: uncharacterized protein (95 aa).

Residues 1-64 (MEIDDIFASK…PKGASGRKRT (64 aa)) are disordered. A compositionally biased stretch (basic and acidic residues) spans 18-28 (KSNDSKSEAKA). A compositionally biased stretch (polar residues) spans 35-49 (TKSTPSRPKPTNNQD).

This is an uncharacterized protein from Schizosaccharomyces pombe (strain 972 / ATCC 24843) (Fission yeast).